We begin with the raw amino-acid sequence, 243 residues long: Sec-independent protein translocase protein TatC (243 aa).

The next 7 helical transmembrane spans lie at 18-38, 70-90, 106-126, 132-152, 153-173, 191-211, and 213-233; these read VIII…NYVD, IAII…IWSF, MIPV…FTVF, FLLQ…KYIS, FALN…VVYI, YALL…DVIS, and LLMA…AKFI.

The protein belongs to the TatC family. In terms of assembly, forms a complex with TatA.

Its subcellular location is the cell membrane. Functionally, part of the twin-arginine translocation (Tat) system that transports large folded proteins containing a characteristic twin-arginine motif in their signal peptide across membranes. The protein is Sec-independent protein translocase protein TatC of Carboxydothermus hydrogenoformans (strain ATCC BAA-161 / DSM 6008 / Z-2901).